A 558-amino-acid chain; its full sequence is Cytochrome P450 monooxygenase sdnT (558 aa).

Residues 21 to 41 (IISLTTCFVCAFAVSFVALAI) traverse the membrane as a helical segment. A disordered region spans residues 298-317 (QNAGSNTRPKPPKRKQDTQP). 2 N-linked (GlcNAc...) asparagine glycosylation sites follow: asparagine 464 and asparagine 495. Position 505 (cysteine 505) interacts with heme.

Belongs to the cytochrome P450 family. Requires heme as cofactor.

It localises to the membrane. The protein operates within antibiotic biosynthesis. Its function is as follows. Cytochrome P450 monooxygenase; part of the gene cluster that mediates the biosynthesis of sordarin and hypoxysordarin, glycoside antibiotics with a unique tetracyclic diterpene aglycone structure. First, the geranylgeranyl diphosphate synthase sdnC constructs GGDP from farnesyl diphosphate and isopentenyl diphosphate. The diterpene cyclase sdnA then catalyzes the cyclization of GGDP to afford cycloaraneosene. Cycloaraneosene is then hydroxylated four times by the putative cytochrome P450 monooxygenases sdnB, sdnE, sdnF and sdnH to give a hydroxylated cycloaraneosene derivative such as cycloaraneosene-8,9,13,19-tetraol. Although the order of the hydroxylations is unclear, at least C8, C9 and C13 of the cycloaraneosene skeleton are hydroxylated before the sordaricin formation. Dehydration of the 13-hydroxy group of the hydroxylated cycloaraneosene derivative might be catalyzed by an unassigned hypothetical protein such as sdnG and sdnP to construct the cyclopentadiene moiety. The FAD-dependent oxidoreductase sdnN is proposed to catalyze the oxidation at C9 of the hydroxylated cycloaraneosene derivative and also catalyze the Baeyer-Villiger oxidation to give the lactone intermediate. The presumed lactone intermediate would be hydrolyzed to give an acrolein moiety and a carboxylate moiety. Then, [4+2]cycloaddition would occur between the acrolein moiety and the cyclopentadiene moiety to give sordaricin. SdnN might also be involved in the [4+2]cycloaddition after the hypothesized oxidation to accommodate the oxidized product and prompt the [4+2]cycloaddition. GDP-6-deoxy-D-altrose may be biosynthesized from GDP-D-mannose by the putative GDP-mannose-4,6-dehydratase sdnI and the short-chain dehydrogenase sdnK. The glycosyltransferase sdnJ catalyzes the attachment of 6-deoxy-D-altrose onto the 19-hydroxy group of sordaricin to give 4'-O-demethylsordarin. The methyltransferase sdnD would complete the biosynthesis of sordarin. Sordarin can be further modified into hypoxysordarin. The unique acyl chain at the 3'-hydroxy group of hypoxysordarin would be constructed by an iterative type I PKS sdnO and the trans-acting polyketide methyltransferase sdnL. SdnL would be responsible for the introduction of an alpha-methyl group of the polyketide chain. Alternatively, the beta-lactamase-like protein sdnR might be responsible for the cleavage and transfer of the polyketide chain from the PKS sdnO to sordarin. Two putative cytochrome P450 monooxygenases, sdnQ and sdnT, might catalyze the epoxidations of the polyketide chain to complete the biosynthesis of hypoxysordarin. Transcriptional regulators sdnM and sdnS are presumably encoded for the transcriptional regulation of the expression of the sdn gene cluster. The sequence is that of Cytochrome P450 monooxygenase sdnT from Sordaria araneosa (Pleurage araneosa).